We begin with the raw amino-acid sequence, 190 residues long: Lipid A acyltransferase PagP (190 aa).

A signal peptide spans 1 to 18 (MKRLISCLTIICALNASA). Residues histidine 60, aspartate 103, and serine 104 contribute to the active site.

It belongs to the lipid A palmitoyltransferase family. Homodimer.

It is found in the cell outer membrane. The enzyme catalyses a lipid A + a 1,2-diacyl-sn-glycero-3-phosphocholine = a hepta-acyl lipid A + a 2-acyl-sn-glycero-3-phosphocholine. The catalysed reaction is a lipid IVA + a 1,2-diacyl-sn-glycero-3-phosphocholine = a lipid IVB + a 2-acyl-sn-glycero-3-phosphocholine. It carries out the reaction a lipid IIA + a 1,2-diacyl-sn-glycero-3-phosphocholine = a lipid IIB + a 2-acyl-sn-glycero-3-phosphocholine. In terms of biological role, transfers a fatty acid residue from the sn-1 position of a phospholipid to the N-linked hydroxyfatty acid chain on the proximal unit of lipid A or its precursors. This Legionella pneumophila (strain Paris) protein is Lipid A acyltransferase PagP.